The primary structure comprises 256 residues: Pimeloyl-[acyl-carrier protein] methyl ester esterase (256 aa).

One can recognise an AB hydrolase-1 domain in the interval 15-242 (HLVLLHGWGL…AAHAPFISHP (228 aa)). Residues Trp-22, 82–83 (SL), and 143–147 (FLALQ) each bind substrate. Ser-82 (nucleophile) is an active-site residue. Catalysis depends on residues Asp-207 and His-235. Residue His-235 participates in substrate binding.

The protein belongs to the AB hydrolase superfamily. Carboxylesterase BioH family. Monomer.

The protein localises to the cytoplasm. It carries out the reaction 6-carboxyhexanoyl-[ACP] methyl ester + H2O = 6-carboxyhexanoyl-[ACP] + methanol + H(+). It functions in the pathway cofactor biosynthesis; biotin biosynthesis. In terms of biological role, the physiological role of BioH is to remove the methyl group introduced by BioC when the pimeloyl moiety is complete. It allows to synthesize pimeloyl-ACP via the fatty acid synthetic pathway through the hydrolysis of the ester bonds of pimeloyl-ACP esters. This Salmonella dublin (strain CT_02021853) protein is Pimeloyl-[acyl-carrier protein] methyl ester esterase.